The sequence spans 136 residues: Active regulator of SIRT1 (136 aa).

A Citrulline modification is found at arginine 7. The tract at residues 13-58 (LAASEAPRDPPGQAKPRGAPVKRPRKTKAIQAQKLRNSAKGKVPKS) is disordered. At serine 84 the chain carries Phosphoserine.

It belongs to the AROS family. In terms of assembly, part of the small subunit (SSU) processome, composed of more than 70 proteins and the RNA chaperone small nucleolar RNA (snoRNA) U3. Interacts with RPS19; the interaction is direct and mediates the integration of RPS19 in state post-A1. Interacts with SIRT1. In terms of processing, citrullinated by PADI4. Widely expressed (at protein level).

The protein resides in the nucleus. It localises to the nucleolus. Functionally, part of the small subunit (SSU) processome, first precursor of the small eukaryotic ribosomal subunit. During the assembly of the SSU processome in the nucleolus, many ribosome biogenesis factors, an RNA chaperone and ribosomal proteins associate with the nascent pre-rRNA and work in concert to generate RNA folding, modifications, rearrangements and cleavage as well as targeted degradation of pre-ribosomal RNA by the RNA exosome. Acts as a chaperone that specifically mediates the integration of RPS19 in state post-A1. Direct regulator of SIRT1. Enhances SIRT1-mediated deacetylation of p53/TP53, thereby participating in inhibition of p53/TP53-mediated transcriptional activity. In Homo sapiens (Human), this protein is Active regulator of SIRT1.